Consider the following 138-residue polypeptide: Large ribosomal subunit protein uL16 (138 aa).

This sequence belongs to the universal ribosomal protein uL16 family. In terms of assembly, part of the 50S ribosomal subunit.

Functionally, binds 23S rRNA and is also seen to make contacts with the A and possibly P site tRNAs. The protein is Large ribosomal subunit protein uL16 of Anaeromyxobacter dehalogenans (strain 2CP-1 / ATCC BAA-258).